Reading from the N-terminus, the 299-residue chain is Ribosomal RNA small subunit methyltransferase H (299 aa).

Residues 36–38 (GGH), Asp-55, Asp-103, and Gln-110 contribute to the S-adenosyl-L-methionine site. Basic and acidic residues-rich tracts occupy residues 268–282 (KPVRPSEEEIRENPR) and 289–299 (RAAERIEKGGD). Residues 268–299 (KPVRPSEEEIRENPRARSGRLRAAERIEKGGD) are disordered.

It belongs to the methyltransferase superfamily. RsmH family.

It localises to the cytoplasm. The catalysed reaction is cytidine(1402) in 16S rRNA + S-adenosyl-L-methionine = N(4)-methylcytidine(1402) in 16S rRNA + S-adenosyl-L-homocysteine + H(+). Specifically methylates the N4 position of cytidine in position 1402 (C1402) of 16S rRNA. The polypeptide is Ribosomal RNA small subunit methyltransferase H (Thermotoga petrophila (strain ATCC BAA-488 / DSM 13995 / JCM 10881 / RKU-1)).